Here is a 371-residue protein sequence, read N- to C-terminus: Flagellar P-ring protein (371 aa).

Positions 1–28 (MPARPTPPAVPLALALAAALAAPAPAAA) are cleaved as a signal peptide.

Belongs to the FlgI family. In terms of assembly, the basal body constitutes a major portion of the flagellar organelle and consists of four rings (L,P,S, and M) mounted on a central rod.

It is found in the periplasm. Its subcellular location is the bacterial flagellum basal body. Assembles around the rod to form the L-ring and probably protects the motor/basal body from shearing forces during rotation. This is Flagellar P-ring protein from Anaeromyxobacter dehalogenans (strain 2CP-C).